We begin with the raw amino-acid sequence, 59 residues long: Large ribosomal subunit protein uL30 (59 aa).

The protein belongs to the universal ribosomal protein uL30 family. As to quaternary structure, part of the 50S ribosomal subunit.

The chain is Large ribosomal subunit protein uL30 from Shewanella amazonensis (strain ATCC BAA-1098 / SB2B).